The chain runs to 846 residues: MSGKIQLLVAFLLTSACLIYCTKYVTVFYGVPVWKNASIPLFCATKNRDTWGTIQCLPDNDDYQEIPLNVTEAFDAWDNIVTEQAVEDVWNLFETSIKPCVKLTPLCVTMNCNASTESAVATTSPSGPDMINDTDPCIQLNNCSGLREEDMVECQFNMTGLELDKKKQYSETWYSKDVVCESDNSTDRKRCYMNHCNTSVITESCDKHYWDAMRFRYCAPPGFVLLRCNDTNYSGFEPNCSKVVASTCTRMMETQPSTWLGFNGTRAENRTYIYWHGRDNRTIISLNKYYNLTILCRRPENKTVVPITLMSGRRFHSQKIINKKPRQAWCRFKGEWREAMQEVKQTLVKHPRYKGTNDTNKINFTAPEKDSDPEVAYMWTNCRGEFLYCNMTWFLNWVENKTGQQHNYVPCHIEQIINTWHKVGKNVYLPPREGELSCESTVTSIIANIDVDGDNRTNITFSAEVAELYRLELGDYKLVEVTPIGFAPTAEKRYSSAPGRHKRGVLVLGFLGFLTTAGAAMGAASLTLSAQSRTLFRGIVQQQQQLLDVVKRQQEMLRLTVWGTKNLQARVTAIEKYLADQARLNSWGCAFRQVCHTTVPWVNDTLTPEWNNMTWQEWEHKIRFLEANISESLEQAQIQQEKNMYELQKLNSWDVFGNWFDLTSWIKYIQYGVMIVVGIVALRIVIYVVQMLSRLRKGYRPVFSSPPGYIQQIHIHKDWEQPDREETEEDVGNDVGSRSWPWPIEYIHFLIRLLIRLLTRLYNSCRDLLSRLYLILQPLRDWLRLKAAYLQYGCEWIQEAFQALARVTRETLTSAGRSLWGALGRIGRGILAVPRRIRQGAEIALL.

A signal peptide spans methionine 1 to cysteine 21. Residues threonine 22 to tyrosine 671 are Extracellular-facing. A glycan (N-linked (GlcNAc...) asparagine; by host) is linked at asparagine 36. An intrachain disulfide couples cysteine 43 to cysteine 56. Residues asparagine 69, asparagine 113, asparagine 132, asparagine 142, asparagine 157, asparagine 184, asparagine 197, asparagine 229, asparagine 232, asparagine 239, asparagine 263, asparagine 269, asparagine 280, asparagine 291, asparagine 301, asparagine 357, asparagine 363, asparagine 390, asparagine 400, asparagine 455, and asparagine 458 are each glycosylated (N-linked (GlcNAc...) asparagine; by host). Disulfide bonds link cysteine 100/cysteine 205, cysteine 107/cysteine 196, cysteine 112/cysteine 154, cysteine 218/cysteine 248, and cysteine 228/cysteine 240. The tract at residues cysteine 112–glutamate 153 is V1. The tract at residues cysteine 154 to cysteine 196 is V2. Residues cysteine 296–tryptophan 329 form a V3 region. Cysteine 296 and cysteine 330 form a disulfide bridge. 2 disulfides stabilise this stretch: cysteine 382–cysteine 438 and cysteine 389–cysteine 411. The V4 stretch occupies residues cysteine 389–cysteine 411. The V5 stretch occupies residues aspartate 454–phenylalanine 461. The tract at residues glycine 504 to alanine 524 is fusion peptide. The interval leucine 567–arginine 583 is immunosuppression. Asparagine 603, asparagine 612, and asparagine 628 each carry an N-linked (GlcNAc...) asparagine; by host glycan. Residues glutamine 616–asparagine 643 are a coiled coil. An MPER; binding to GalCer region spans residues lysine 649–glutamine 670. The helical transmembrane segment at glycine 672–leucine 692 threads the bilayer. The Cytoplasmic portion of the chain corresponds to serine 693 to leucine 846. The short motif at tyrosine 699 to valine 702 is the YXXV motif; contains endocytosis signal element. The S-palmitoyl cysteine; by host moiety is linked to residue cysteine 765. The Di-leucine internalization motif motif lies at leucine 845 to leucine 846.

In terms of assembly, the mature envelope protein (Env) consists of a homotrimer of non-covalently associated gp120-gp41 heterodimers. The resulting complex protrudes from the virus surface as a spike. There seems to be as few as 10 spikes on the average virion. Interacts with human CD4, CCR5 and CXCR4, to form a P4HB/PDI-CD4-CXCR4-gp120 complex. Gp120 also interacts with the C-type lectins CD209/DC-SIGN and CLEC4M/DC-SIGNR (collectively referred to as DC-SIGN(R)). Gp120 and gp41 interact with GalCer. The mature envelope protein (Env) consists of a homotrimer of non-covalently associated gp120-gp41 heterodimers. The resulting complex protrudes from the virus surface as a spike. There seems to be as few as 10 spikes on the average virion. In terms of processing, specific enzymatic cleavages in vivo yield mature proteins. Envelope glycoproteins are synthesized as an inactive precursor that is heavily N-glycosylated and processed likely by host cell furin in the Golgi to yield the mature SU and TM proteins. The cleavage site between SU and TM requires the minimal sequence [KR]-X-[KR]-R. Palmitoylation of the transmembrane protein and of Env polyprotein (prior to its proteolytic cleavage) is essential for their association with host cell membrane lipid rafts. Palmitoylation is therefore required for envelope trafficking to classical lipid rafts, but not for viral replication.

The protein localises to the virion membrane. The protein resides in the host cell membrane. It is found in the host endosome membrane. In terms of biological role, the surface protein gp120 (SU) attaches the virus to the host lymphoid cell by binding to the primary receptor CD4. This interaction induces a structural rearrangement creating a high affinity binding site for a chemokine coreceptor like CXCR4 and/or CCR5. This peculiar 2 stage receptor-interaction strategy allows gp120 to maintain the highly conserved coreceptor-binding site in a cryptic conformation, protected from neutralizing antibodies. Since CD4 also displays a binding site for the disulfide-isomerase P4HB/PDI, a P4HB/PDI-CD4-CXCR4-gp120 complex may form. In that complex, P4HB/PDI could reach and reduce gp120 disulfide bonds, causing major conformational changes in gp120. TXN, another PDI family member could also be involved in disulfide rearrangements in Env during fusion. These changes are transmitted to the transmembrane protein gp41 and are thought to activate its fusogenic potential by unmasking its fusion peptide. The surface protein gp120 is a ligand for CD209/DC-SIGN and CLEC4M/DC-SIGNR, which are respectively found on dendritic cells (DCs), and on endothelial cells of liver sinusoids and lymph node sinuses. These interactions allow capture of viral particles at mucosal surfaces by these cells and subsequent transmission to permissive cells. DCs are professional antigen presenting cells, critical for host immunity by inducing specific immune responses against a broad variety of pathogens. They act as sentinels in various tissues where they take up antigen, process it, and present it to T-cells following migration to lymphoid organs. HIV subverts the migration properties of dendritic cells to gain access to CD4+ T-cells in lymph nodes. Virus transmission to permissive T-cells occurs either in trans (without DCs infection, through viral capture and transmission), or in cis (following DCs productive infection, through the usual CD4-gp120 interaction), thereby inducing a robust infection. In trans infection, bound virions remain infectious over days and it is proposed that they are not degraded, but protected in non-lysosomal acidic organelles within the DCs close to the cell membrane thus contributing to the viral infectious potential during DCs' migration from the periphery to the lymphoid tissues. On arrival at lymphoid tissues, intact virions recycle back to DCs' cell surface allowing virus transmission to CD4+ T-cells. Virion capture also seems to lead to MHC-II-restricted viral antigen presentation, and probably to the activation of HIV-specific CD4+ cells. Its function is as follows. The transmembrane protein gp41 (TM) acts as a class I viral fusion protein. Under the current model, the protein has at least 3 conformational states: pre-fusion native state, pre-hairpin intermediate state, and post-fusion hairpin state. During fusion of viral and target intracellular membranes, the coiled coil regions (heptad repeats) assume a trimer-of-hairpins structure, positioning the fusion peptide in close proximity to the C-terminal region of the ectodomain. The formation of this structure appears to drive apposition and subsequent fusion of viral and target cell membranes. Complete fusion occurs in host cell endosomes and is dynamin-dependent, however some lipid transfer might occur at the plasma membrane. The virus undergoes clathrin-dependent internalization long before endosomal fusion, thus minimizing the surface exposure of conserved viral epitopes during fusion and reducing the efficacy of inhibitors targeting these epitopes. Membranes fusion leads to delivery of the nucleocapsid into the cytoplasm. Functionally, the envelope glycoprotein gp160 precursor down-modulates cell surface CD4 antigen by interacting with it in the endoplasmic reticulum and blocking its transport to the cell surface. In terms of biological role, the gp120-gp41 heterodimer seems to contribute to T-cell depletion during HIV-1 infection. The envelope glycoproteins expressed on the surface of infected cells induce apoptosis through an interaction with uninfected cells expressing the receptor (CD4) and the coreceptors CXCR4 or CCR5. This type of bystander killing may be obtained by at least three distinct mechanisms. First, the interaction between the 2 cells can induce cellular fusion followed by nuclear fusion within the syncytium. Syncytia are condemned to die from apoptosis. Second, the 2 interacting cells may not fuse entirely and simply exchange plasma membrane lipids, after a sort of hemifusion process, followed by rapid death. Third, it is possible that virus-infected cells, on the point of undergoing apoptosis, fuse with CD4-expressing cells, in which case apoptosis is rapidly transmitted from one cell to the other and thus occurs in a sort of contagious fashion. The gp120-gp41 heterodimer allows rapid transcytosis of the virus through CD4 negative cells such as simple epithelial monolayers of the intestinal, rectal and endocervical epithelial barriers. Both gp120 and gp41 specifically recognize glycosphingolipids galactosyl-ceramide (GalCer) or 3' sulfo-galactosyl-ceramide (GalS) present in the lipid rafts structures of epithelial cells. Binding to these alternative receptors allows the rapid transcytosis of the virus through the epithelial cells. This transcytotic vesicle-mediated transport of virions from the apical side to the basolateral side of the epithelial cells does not involve infection of the cells themselves. The polypeptide is Envelope glycoprotein gp160 (env) (Human immunodeficiency virus type 2 subtype A (isolate SBLISY) (HIV-2)).